The following is a 417-amino-acid chain: Serine hydroxymethyltransferase (417 aa).

Residues leucine 117 and 121-123 (GHL) contribute to the (6S)-5,6,7,8-tetrahydrofolate site. Residue lysine 226 is modified to N6-(pyridoxal phosphate)lysine.

This sequence belongs to the SHMT family. Homodimer. Requires pyridoxal 5'-phosphate as cofactor.

The protein localises to the cytoplasm. It carries out the reaction (6R)-5,10-methylene-5,6,7,8-tetrahydrofolate + glycine + H2O = (6S)-5,6,7,8-tetrahydrofolate + L-serine. The protein operates within one-carbon metabolism; tetrahydrofolate interconversion. It participates in amino-acid biosynthesis; glycine biosynthesis; glycine from L-serine: step 1/1. Its function is as follows. Catalyzes the reversible interconversion of serine and glycine with tetrahydrofolate (THF) serving as the one-carbon carrier. This reaction serves as the major source of one-carbon groups required for the biosynthesis of purines, thymidylate, methionine, and other important biomolecules. Also exhibits THF-independent aldolase activity toward beta-hydroxyamino acids, producing glycine and aldehydes, via a retro-aldol mechanism. This chain is Serine hydroxymethyltransferase, found in Shouchella clausii (strain KSM-K16) (Alkalihalobacillus clausii).